The chain runs to 703 residues: Polyribonucleotide nucleotidyltransferase (703 aa).

Residues D482 and D488 each contribute to the Mg(2+) site. The KH domain occupies 549–607 (PKAQVMKIPEDKVGLVIGPAGKNIKYIKEQFGASVWIDGANAYINAPTIEAVNKAADFI). Residues 617-679 (GGVYEGKVIR…EQNRLNLCSP (63 aa)) form the S1 motif domain. A disordered region spans residues 677–703 (CSPDYQKPENQERPRKEQLNRKPHHRK). Positions 682-696 (QKPENQERPRKEQLN) are enriched in basic and acidic residues.

It belongs to the polyribonucleotide nucleotidyltransferase family. Mg(2+) is required as a cofactor.

The protein resides in the cytoplasm. The enzyme catalyses RNA(n+1) + phosphate = RNA(n) + a ribonucleoside 5'-diphosphate. Involved in mRNA degradation. Catalyzes the phosphorolysis of single-stranded polyribonucleotides processively in the 3'- to 5'-direction. The chain is Polyribonucleotide nucleotidyltransferase from Hydrogenobaculum sp. (strain Y04AAS1).